The chain runs to 415 residues: uncharacterized protein (415 aa).

[4Fe-4S] cluster is bound by residues cysteine 85, cysteine 91, cysteine 94, and cysteine 175. Residues glutamine 248, tyrosine 276, glutamate 297, and asparagine 344 each coordinate S-adenosyl-L-methionine. Cysteine 371 serves as the catalytic Nucleophile.

The protein belongs to the class I-like SAM-binding methyltransferase superfamily. RNA M5U methyltransferase family.

This is an uncharacterized protein from Leptospira interrogans serogroup Icterohaemorrhagiae serovar copenhageni (strain Fiocruz L1-130).